We begin with the raw amino-acid sequence, 381 residues long: tRNA (guanine(26)-N(2))-dimethyltransferase (381 aa).

One can recognise a Trm1 methyltransferase domain in the interval 6 to 378 (FEVHEGKAKV…APYEVFVEVM (373 aa)). S-adenosyl-L-methionine is bound by residues Arg-38, Arg-63, Asp-80, Asp-122, and Ala-123.

This sequence belongs to the class I-like SAM-binding methyltransferase superfamily. Trm1 family. Monomer.

The enzyme catalyses guanosine(26) in tRNA + 2 S-adenosyl-L-methionine = N(2)-dimethylguanosine(26) in tRNA + 2 S-adenosyl-L-homocysteine + 2 H(+). Functionally, dimethylates a single guanine residue at position 26 of a number of tRNAs using S-adenosyl-L-methionine as donor of the methyl groups. The chain is tRNA (guanine(26)-N(2))-dimethyltransferase from Pyrococcus furiosus (strain ATCC 43587 / DSM 3638 / JCM 8422 / Vc1).